The following is a 421-amino-acid chain: Nuclear envelope integral membrane protein 2 (421 aa).

An N-terminal signal peptide occupies residues 1–22; the sequence is MPPGSWWLVLWLPPLATLPAGA. Helical transmembrane passes span 147-167, 175-195, 206-226, 232-252, and 279-299; these read NVVD…FFYA, VFYY…FVLL, TFGA…CQLM, LWCG…LCSF, and LVLV…MILL.

The protein belongs to the NEMP family.

The protein resides in the nucleus inner membrane. The chain is Nuclear envelope integral membrane protein 2 (Nemp2) from Rattus norvegicus (Rat).